A 63-amino-acid chain; its full sequence is Large ribosomal subunit protein uL29 (63 aa).

This sequence belongs to the universal ribosomal protein uL29 family.

The sequence is that of Large ribosomal subunit protein uL29 from Aeromonas salmonicida (strain A449).